Reading from the N-terminus, the 282-residue chain is Energy-coupling factor transporter ATP-binding protein EcfA1 (282 aa).

The ABC transporter domain maps to 9 to 243; the sequence is IEIDNLSFKY…NDELLNIGLD (235 aa). 43-50 is a binding site for ATP; the sequence is GHNGSGKS.

This sequence belongs to the ABC transporter superfamily. Energy-coupling factor EcfA family. As to quaternary structure, forms a stable energy-coupling factor (ECF) transporter complex composed of 2 membrane-embedded substrate-binding proteins (S component), 2 ATP-binding proteins (A component) and 2 transmembrane proteins (T component).

Its subcellular location is the cell membrane. Its function is as follows. ATP-binding (A) component of a common energy-coupling factor (ECF) ABC-transporter complex. Unlike classic ABC transporters this ECF transporter provides the energy necessary to transport a number of different substrates. This chain is Energy-coupling factor transporter ATP-binding protein EcfA1, found in Ligilactobacillus salivarius (strain UCC118) (Lactobacillus salivarius).